Consider the following 288-residue polypeptide: ATP synthase subunit a (288 aa).

The next 6 helical transmembrane spans lie at 47–67 (LDSMLWSIGLGIVFCAIFWMV), 104–124 (LIAPLALTIFVWIFLMNLMDL), 157–177 (DPNITLGMSFSVFILILFYSI), 199–219 (PIVQIILIPINFILEFVTLIA), 237–257 (LIFILIALMPFWIQWALSVPW), and 258–278 (AIFHILIITLQAFVFMMLTIV).

The protein belongs to the ATPase A chain family. In terms of assembly, F-type ATPases have 2 components, CF(1) - the catalytic core - and CF(0) - the membrane proton channel. CF(1) has five subunits: alpha(3), beta(3), gamma(1), delta(1), epsilon(1). CF(0) has three main subunits: a(1), b(2) and c(9-12). The alpha and beta chains form an alternating ring which encloses part of the gamma chain. CF(1) is attached to CF(0) by a central stalk formed by the gamma and epsilon chains, while a peripheral stalk is formed by the delta and b chains.

The protein localises to the cell inner membrane. Its function is as follows. Key component of the proton channel; it plays a direct role in the translocation of protons across the membrane. This Psychrobacter arcticus (strain DSM 17307 / VKM B-2377 / 273-4) protein is ATP synthase subunit a.